The chain runs to 483 residues: MEEGDGGLRSLVPGGPLLLVLYGLLEASGGGRALPQLSDDIPFRVNWPGTEFSLPTTGVLYKEDNYIIMTTAHKEKYKCILPLVTSGDEEEEKDYKGPNPRELLEPLFKQSSCSYRIESYWTYEVCHGKHIRQYHEEKETGQKVNIHEYYLGNMLAKNLLYEKEREAKENEKSNEIPTKNIEGQMTPYYPVGMGNGTPCSLKQNRPRSSTVMYICHPESKHEILSVAEVTTCEYEVVILTPLLCSHPKYKFRASPVNDIFCQSLPGSPFKPLTLRQLEQQEEILRVPFRRNKEEDLPSAKEERFPAIHKPIAVGSQPVLTVGTTHISKLTDDQLIKEFLSGSYCFHGGVGWWKYEFCYGKHVHQYHEDKDNGKTSVVVGTWNQEEHVEWAKKNTARAYHLQDDGTQTVRMVSHFYGNGDICDITDKPRQVTVKLKCKESDSPHAVTVYMLEPHSCQYILGVESPVICKILDTADENGLLSLPN.

The signal sequence occupies residues 1 to 33 (MEEGDGGLRSLVPGGPLLLVLYGLLEASGGGRA). MRH domains are found at residues 111-246 (SSCS…LCSH) and 342-469 (SYCF…ICKI). Cysteine 113 and cysteine 126 are oxidised to a cystine. Asparagine 195 carries an N-linked (GlcNAc...) asparagine glycan. Disulfide bonds link cysteine 199–cysteine 232, cysteine 215–cysteine 244, cysteine 344–cysteine 357, cysteine 421–cysteine 455, and cysteine 436–cysteine 467.

May form a complex with OS9, HSPA5, SYVN1, and SEL1L with which it interacts directly. Interacts (via PRKCSH 2 domain) with KREMEN2 (when glycosylated). Interacts with HSPA5. N-glycosylated.

The protein resides in the endoplasmic reticulum lumen. Functionally, probable lectin that binds selectively to improperly folded lumenal proteins. May function in endoplasmic reticulum quality control and endoplasmic reticulum-associated degradation (ERAD) of both non-glycosylated proteins and glycoproteins. This chain is Endoplasmic reticulum lectin 1 (Erlec1), found in Mus musculus (Mouse).